The chain runs to 50 residues: uncharacterized protein (50 aa).

The protein resides in the mitochondrion. This is an uncharacterized protein from Saccharomyces cerevisiae (strain ATCC 204508 / S288c) (Baker's yeast).